The chain runs to 72 residues: Putative sodium channel toxin Ts18 (72 aa).

The first 21 residues, 1–21 (MNFRFPFLLMITISLIGAVLT), serve as a signal peptide directing secretion. 3 cysteine pairs are disulfide-bonded: C38–C61, C47–C66, and C51–C68.

Belongs to the long (3 C-C) scorpion toxin superfamily. In terms of tissue distribution, expressed by the venom gland.

It localises to the secreted. In terms of biological role, binds to sodium channels (Nav) and affects the channel activation process. The protein is Putative sodium channel toxin Ts18 of Tityus serrulatus (Brazilian scorpion).